We begin with the raw amino-acid sequence, 310 residues long: Cytochrome f (310 aa).

An N-terminal signal peptide occupies residues methionine 1–alanine 23. Residues tyrosine 28, cysteine 48, cysteine 51, and histidine 52 each contribute to the heme site. The helical transmembrane segment at isoleucine 277–lysine 297 threads the bilayer.

Belongs to the cytochrome f family. As to quaternary structure, the 4 large subunits of the cytochrome b6-f complex are cytochrome b6, subunit IV (17 kDa polypeptide, PetD), cytochrome f and the Rieske protein, while the 4 small subunits are PetG, PetL, PetM and PetN. The complex functions as a dimer. It depends on heme as a cofactor.

It is found in the cellular thylakoid membrane. Component of the cytochrome b6-f complex, which mediates electron transfer between photosystem II (PSII) and photosystem I (PSI), cyclic electron flow around PSI, and state transitions. The polypeptide is Cytochrome f (Prochlorococcus marinus (strain MIT 9313)).